We begin with the raw amino-acid sequence, 465 residues long: Glutamate--tRNA ligase (465 aa).

The 'HIGH' region signature appears at 8–18 (PSPTGHLHIGG). Residues C97, C99, C124, and E126 each contribute to the Zn(2+) site. The short motif at 234–238 (RLSKR) is the 'KMSKS' region element. ATP is bound at residue K237.

The protein belongs to the class-I aminoacyl-tRNA synthetase family. Glutamate--tRNA ligase type 1 subfamily. As to quaternary structure, monomer. The cofactor is Zn(2+).

It is found in the cytoplasm. It catalyses the reaction tRNA(Glu) + L-glutamate + ATP = L-glutamyl-tRNA(Glu) + AMP + diphosphate. Functionally, catalyzes the attachment of glutamate to tRNA(Glu) in a two-step reaction: glutamate is first activated by ATP to form Glu-AMP and then transferred to the acceptor end of tRNA(Glu). In Thermodesulfovibrio yellowstonii (strain ATCC 51303 / DSM 11347 / YP87), this protein is Glutamate--tRNA ligase.